A 248-amino-acid polypeptide reads, in one-letter code: Ferric nitrobindin-like protein (248 aa).

Polar residues-rich tracts occupy residues 1 to 25 and 32 to 43; these read MSSD…TNSG and QAVNLAAEQSKS. Positions 1-49 are disordered; sequence MSSDKANNQSPDQGANTPAESTNSGPKLDGNQAVNLAAEQSKSTADKNL. The short motif at 82–88 is the GXWXGXG element; sequence GVWRGQG. Residues 118-147 form a disordered region; that stretch reads SRTWKINPPAEEGAEADGDEASAESAGEPE. Residues 129-139 show a composition bias toward acidic residues; sequence EGAEADGDEAS.

Belongs to the nitrobindin family.

The sequence is that of Ferric nitrobindin-like protein from Corynebacterium urealyticum (strain ATCC 43042 / DSM 7109).